The following is a 273-amino-acid chain: Outer surface protein A (273 aa).

The signal sequence occupies residues 1-16; sequence MKKYLLGIGLILALIA. The N-palmitoyl cysteine moiety is linked to residue Cys17. Cys17 carries the S-diacylglycerol cysteine lipid modification.

The protein belongs to the OspA lipoprotein family.

Its subcellular location is the cell outer membrane. The protein resides in the cell surface. The sequence is that of Outer surface protein A from Borreliella burgdorferi (Lyme disease spirochete).